Reading from the N-terminus, the 399-residue chain is Subtilisin-like protease 4 (399 aa).

The signal sequence occupies residues 1-19 (MVCLKTLSVFLAAFAAADA). The propeptide occupies 20 to 118 (RAVFKTQGHK…VEQDQVVRIS (99 aa)). In terms of domain architecture, Inhibitor I9 spans 38–117 (YIVVMKDGVS…YVEQDQVVRI (80 aa)). Asn102 carries N-linked (GlcNAc...) asparagine glycosylation. Positions 128–399 (SWGLGRVSHR…NRLLYNGSGQ (272 aa)) constitute a Peptidase S8 domain. Residues Asp160 and His191 each act as charge relay system in the active site. 2 N-linked (GlcNAc...) asparagine glycosylation sites follow: Asn252 and Asn308. Ser346 acts as the Charge relay system in catalysis. Residue Asn395 is glycosylated (N-linked (GlcNAc...) asparagine).

The protein belongs to the peptidase S8 family.

It localises to the secreted. In terms of biological role, secreted subtilisin-like serine protease with keratinolytic activity that contributes to pathogenicity. In Trichophyton rubrum (Athlete's foot fungus), this protein is Subtilisin-like protease 4 (SUB4).